The primary structure comprises 286 residues: Digeranylgeranylglyceryl phosphate synthase (286 aa).

A run of 8 helical transmembrane segments spans residues 21-41 (AVAA…FAVT), 42-62 (TAHV…GNAI), 96-116 (FLFV…IVLA), 133-155 (LPGV…GAAA), 162-181 (FGVV…REII), 214-234 (VLLV…FGIW), 235-255 (YLTL…QAPD), and 266-286 (RGMF…VAGI).

This sequence belongs to the UbiA prenyltransferase family. DGGGP synthase subfamily. Mg(2+) is required as a cofactor.

The protein localises to the cell membrane. It carries out the reaction sn-3-O-(geranylgeranyl)glycerol 1-phosphate + (2E,6E,10E)-geranylgeranyl diphosphate = 2,3-bis-O-(geranylgeranyl)-sn-glycerol 1-phosphate + diphosphate. It functions in the pathway membrane lipid metabolism; glycerophospholipid metabolism. Functionally, prenyltransferase that catalyzes the transfer of the geranylgeranyl moiety of geranylgeranyl diphosphate (GGPP) to the C2 hydroxyl of (S)-3-O-geranylgeranylglyceryl phosphate (GGGP). This reaction is the second ether-bond-formation step in the biosynthesis of archaeal membrane lipids. The polypeptide is Digeranylgeranylglyceryl phosphate synthase (Haloquadratum walsbyi (strain DSM 16790 / HBSQ001)).